The primary structure comprises 127 residues: Mu-like prophage FluMu protein gp41 (127 aa).

The tract at residues 107–127 (VSRGRLDTADQETGKDLSAVS) is disordered. Basic and acidic residues predominate over residues 110–121 (GRLDTADQETGK).

It to phage Mu protein gp41.

This is Mu-like prophage FluMu protein gp41 from Haemophilus influenzae (strain ATCC 51907 / DSM 11121 / KW20 / Rd).